The sequence spans 1198 residues: Fibronectin type-III domain-containing protein 3a (1198 aa).

The segment covering 189-201 (KLKDRHGTQKDKL) has biased composition (basic and acidic residues). Positions 189 to 256 (KLKDRHGTQK…SQTDVEIEEK (68 aa)) are disordered. Over residues 229 to 247 (GISTGSTKSKSVGKGKSNS) the composition is skewed to low complexity. 9 Fibronectin type-III domains span residues 269 to 370 (NIAK…TMSC), 374 to 466 (APNL…TSGT), 470 to 563 (TPAS…TCPD), 567 to 661 (APSK…TPAV), 665 to 758 (PCQP…TAPG), 762 to 852 (QCKP…TPAS), 864 to 951 (SEDE…TKPL), 952 to 1045 (PPDP…TPKS), and 1046 to 1151 (VPAA…TEPP). Residues 553-574 (SETVDYTTCPDKPGAPSKPSVK) form a disordered region. A helical transmembrane segment spans residues 1172 to 1192 (VCAAVILALFAIFSILIAVII).

This sequence belongs to the FNDC3 family.

The protein localises to the golgi apparatus membrane. The polypeptide is Fibronectin type-III domain-containing protein 3a (FNDC3A) (Gallus gallus (Chicken)).